The chain runs to 157 residues: Small ribosomal subunit protein uS7 (157 aa).

It belongs to the universal ribosomal protein uS7 family. Part of the 30S ribosomal subunit. Contacts proteins S9 and S11.

One of the primary rRNA binding proteins, it binds directly to 16S rRNA where it nucleates assembly of the head domain of the 30S subunit. Is located at the subunit interface close to the decoding center, probably blocks exit of the E-site tRNA. The chain is Small ribosomal subunit protein uS7 from Eikenella corrodens.